The following is a 299-amino-acid chain: UDP-3-O-acyl-N-acetylglucosamine deacetylase (299 aa).

Positions 75, 232, and 236 each coordinate Zn(2+). The active-site Proton donor is the H259.

Belongs to the LpxC family. Zn(2+) is required as a cofactor.

It carries out the reaction a UDP-3-O-[(3R)-3-hydroxyacyl]-N-acetyl-alpha-D-glucosamine + H2O = a UDP-3-O-[(3R)-3-hydroxyacyl]-alpha-D-glucosamine + acetate. Its pathway is glycolipid biosynthesis; lipid IV(A) biosynthesis; lipid IV(A) from (3R)-3-hydroxytetradecanoyl-[acyl-carrier-protein] and UDP-N-acetyl-alpha-D-glucosamine: step 2/6. Catalyzes the hydrolysis of UDP-3-O-myristoyl-N-acetylglucosamine to form UDP-3-O-myristoylglucosamine and acetate, the committed step in lipid A biosynthesis. The sequence is that of UDP-3-O-acyl-N-acetylglucosamine deacetylase from Helicobacter hepaticus (strain ATCC 51449 / 3B1).